The primary structure comprises 36 residues: Pancreatic polypeptide (36 aa).

Tyrosine amide is present on tyrosine 36.

It belongs to the NPY family.

It is found in the secreted. In terms of biological role, hormone secreted by pancreatic cells that acts as a regulator of pancreatic and gastrointestinal functions probably by signaling through the G protein-coupled receptor NPY4R2. This is Pancreatic polypeptide (PPY) from Tapirus pinchaque (Mountain tapir).